We begin with the raw amino-acid sequence, 361 residues long: Mitochondrial import receptor subunit TOM40 homolog (361 aa).

A compositionally biased stretch (low complexity) spans 1 to 10 (MGNVLAASSP). The segment at 1-71 (MGNVLAASSP…AASAGGTADD (71 aa)) is disordered. Residues 11 to 36 (PAGPPPPPAPPLVGLPPPPPSPPGFT) are compositionally biased toward pro residues. The span at 40-52 (LGGGLGAGAGTGR) shows a compositional bias: gly residues. A compositionally biased stretch (low complexity) spans 59–71 (GTAAASAGGTADD).

The protein belongs to the Tom40 family. Forms part of the preprotein translocase complex of the outer mitochondrial membrane (TOM complex) which consists of at least 7 different proteins (TOMM5, TOMM6, TOMM7, TOMM20, TOMM22, TOMM40 and TOMM70). Interacts with mitochondrial targeting sequences. Interacts with TIMM29; linking the TIM22 complex to the TOM complex. Forms a complex with BCAP31 (via C-terminus) which mediates the translocation of components of the mitochondrial membrane respiratory chain NADH dehydrogenase (Complex I) from the cytosol to the mitochondria. Interacts (via N-terminus) with CYP1A1 (via mitochondrial targeting signal); this interaction is required for CYP1A1 translocation across the mitochondrial outer membrane.

It localises to the mitochondrion outer membrane. Channel-forming protein essential for import of protein precursors into mitochondria. Plays a role in the assembly of the mitochondrial membrane respiratory chain NADH dehydrogenase (Complex I) by forming a complex with BCAP31 and mediating the translocation of Complex I components from the cytosol to the mitochondria. This is Mitochondrial import receptor subunit TOM40 homolog from Bos taurus (Bovine).